Consider the following 55-residue polypeptide: Large ribosomal subunit protein bL33 (55 aa).

Belongs to the bacterial ribosomal protein bL33 family.

This Mesorhizobium japonicum (strain LMG 29417 / CECT 9101 / MAFF 303099) (Mesorhizobium loti (strain MAFF 303099)) protein is Large ribosomal subunit protein bL33.